The chain runs to 185 residues: Elongation factor P (185 aa).

Belongs to the elongation factor P family.

It is found in the cytoplasm. The protein operates within protein biosynthesis; polypeptide chain elongation. Involved in peptide bond synthesis. Stimulates efficient translation and peptide-bond synthesis on native or reconstituted 70S ribosomes in vitro. Probably functions indirectly by altering the affinity of the ribosome for aminoacyl-tRNA, thus increasing their reactivity as acceptors for peptidyl transferase. This Staphylococcus saprophyticus subsp. saprophyticus (strain ATCC 15305 / DSM 20229 / NCIMB 8711 / NCTC 7292 / S-41) protein is Elongation factor P.